The primary structure comprises 236 residues: Small ribosomal subunit protein uS2c (236 aa).

The protein belongs to the universal ribosomal protein uS2 family.

The protein resides in the plastid. The protein localises to the chloroplast. In Lemna minor (Common duckweed), this protein is Small ribosomal subunit protein uS2c (rps2).